The primary structure comprises 262 residues: Acyl-[acyl-carrier-protein]--UDP-N-acetylglucosamine O-acyltransferase (262 aa).

The protein belongs to the transferase hexapeptide repeat family. LpxA subfamily. As to quaternary structure, homotrimer.

Its subcellular location is the cytoplasm. The enzyme catalyses a (3R)-hydroxyacyl-[ACP] + UDP-N-acetyl-alpha-D-glucosamine = a UDP-3-O-[(3R)-3-hydroxyacyl]-N-acetyl-alpha-D-glucosamine + holo-[ACP]. It participates in glycolipid biosynthesis; lipid IV(A) biosynthesis; lipid IV(A) from (3R)-3-hydroxytetradecanoyl-[acyl-carrier-protein] and UDP-N-acetyl-alpha-D-glucosamine: step 1/6. In terms of biological role, involved in the biosynthesis of lipid A, a phosphorylated glycolipid that anchors the lipopolysaccharide to the outer membrane of the cell. This Shigella boydii serotype 18 (strain CDC 3083-94 / BS512) protein is Acyl-[acyl-carrier-protein]--UDP-N-acetylglucosamine O-acyltransferase.